A 714-amino-acid chain; its full sequence is Nucleolin (714 aa).

The tract at residues 1-303 (MVKLAKAGKT…AKKQKVEGSE (303 aa)) is disordered. N6-acetyllysine occurs at positions 9, 15, and 16. A compositionally biased stretch (acidic residues) spans 24 to 42 (VEEDSEDEEMSEEEDDSSG). 4 positions are modified to phosphoserine: S28, S34, S40, and S41. Residues 55–106 (ATATPAKKVVVSQTKKVAVPTPAKKAAVTPGKKAAATPAKKAVTPAKAVATP) show a composition bias toward low complexity. Copy 1 of the repeat occupies 57–64 (ATPAKKVV). The segment at 57 to 134 (ATPAKKVVVS…GAVTPAKGAK (78 aa)) is 8 X 8 AA tandem repeats of X-T-P-X-K-K-X-X. At S66 the chain carries Phosphoserine. T68, T75, T83, and T91 each carry phosphothreonine. 3 consecutive repeat copies span residues 74-81 (PTPAKKAA), 82-89 (VTPGKKAA), and 90-97 (ATPAKKAV). Residue K95 is modified to N6-acetyllysine. At T98 the chain carries Phosphothreonine. Residues 98–103 (TPAKAV) form a 5; truncated repeat. N6-acetyllysine is present on K101. Residues 104 to 111 (ATPGKKGA) form repeat 6. Phosphothreonine is present on T105. The residue at position 108 (K108) is an N6-acetyllysine. The residue at position 112 (T112) is a Phosphothreonine. K115 is subject to N6-acetyllysine. A run of 2 repeats spans residues 119–126 (ATPGKKGA) and 127–134 (VTPAKGAK). The residue at position 120 (T120) is a Phosphothreonine. K123 carries the post-translational modification N6-acetyllysine. A phosphoserine mark is found at S144 and S157. The span at 144 to 170 (SDEDEDDDDDEDDSDEDEEDEEEDEFE) shows a compositional bias: acidic residues. Residues 171-187 (PPVVKGKQGKVAAAAPA) show a composition bias toward low complexity. S188 carries the phosphoserine modification. Residues 188–216 (SEDEDEEEDEEEEEEDEEEEDDSEEEEAM) show a composition bias toward acidic residues. T219 carries the phosphothreonine modification. Residues 240–272 (EEDDDDEEEDEDEEEDEEEEEDEEEEEEEEEEE) show a composition bias toward acidic residues. Residues 285-301 (MTKQKEVPEAKKQKVEG) show a composition bias toward basic and acidic residues. A Glycyl lysine isopeptide (Lys-Gly) (interchain with G-Cter in SUMO1); alternate cross-link involves residue K298. K298 participates in a covalent cross-link: Glycyl lysine isopeptide (Lys-Gly) (interchain with G-Cter in SUMO2); alternate. The residue at position 302 (S302) is a Phosphoserine. RRM domains lie at 308 to 384 (FNLF…KPKG) and 394 to 467 (RTLL…YTGE). Position 319 is an N6-acetyllysine (K319). A Glycyl lysine isopeptide (Lys-Gly) (interchain with G-Cter in SUMO1); alternate cross-link involves residue K325. K325 participates in a covalent cross-link: Glycyl lysine isopeptide (Lys-Gly) (interchain with G-Cter in SUMO2); alternate. K349 is subject to N6-acetyllysine. S357 carries the phosphoserine modification. The residue at position 368 (T368) is a Phosphothreonine. A Glycyl lysine isopeptide (Lys-Gly) (interchain with G-Cter in SUMO2) cross-link involves residue K371. A Glycyl lysine isopeptide (Lys-Gly) (interchain with G-Cter in SUMO2); alternate cross-link involves residue K378. The residue at position 378 (K378) is an N6-acetyllysine; alternate. At K399 the chain carries N6-acetyllysine. Position 402 is a phosphoserine (S402). At T406 the chain carries Phosphothreonine. 2 positions are modified to N6-acetyllysine: K428 and K445. 2 positions are modified to phosphoserine: S459 and S461. N6-acetyllysine is present on residues K468 and K477. Residues 486-560 (KTLVLSNLSY…RTIRLELQGP (75 aa)) form the RRM 3 domain. Residue K513 forms a Glycyl lysine isopeptide (Lys-Gly) (interchain with G-Cter in SUMO2); alternate linkage. Residue K513 is modified to N6-acetyllysine; alternate. An N6-acetyllysine modification is found at K521. S563 is modified (phosphoserine). K572 is modified (N6-acetyllysine). One can recognise an RRM 4 domain in the interval 572–647 (KTLFVKGLSE…NKVTLDWAKP (76 aa)). K577 participates in a covalent cross-link: Glycyl lysine isopeptide (Lys-Gly) (interchain with G-Cter in SUMO2); alternate. K577 is modified (N6-acetyllysine; alternate). S580 carries the phosphoserine modification. A Glycyl lysine isopeptide (Lys-Gly) (interchain with G-Cter in SUMO1); alternate cross-link involves residue K589. Residue K589 forms a Glycyl lysine isopeptide (Lys-Gly) (interchain with G-Cter in SUMO2); alternate linkage. Residues S591 and S619 each carry the phosphoserine modification. Residue K624 forms a Glycyl lysine isopeptide (Lys-Gly) (interchain with G-Cter in SUMO2) linkage. The segment at 642 to 714 (LDWAKPKGEG…KPQGKKTKFE (73 aa)) is disordered. K646 is subject to N6-acetyllysine. The span at 650–703 (EGGFGGRGGGRGGFGGRGGGRGGGRGGFGGRGRGGFGGRGGFRGGRGGGGGGGD) shows a compositional bias: gly residues. R656, R660, R666, R670, R674, R680, R682, R688, and R692 each carry asymmetric dimethylarginine. An Asymmetric dimethylarginine; alternate modification is found at R695. R695 bears the Omega-N-methylarginine; alternate mark.

As to quaternary structure, identified in a IGF2BP1-dependent mRNP granule complex containing untranslated mRNAs. Component of the SWAP complex that consists of NPM1, NCL/nucleolin, PARP1 and SWAP70. Component of a complex which is at least composed of HTATSF1/Tat-SF1, the P-TEFb complex components CDK9 and CCNT1, RNA polymerase II, SUPT5H, and NCL/nucleolin. Interacts with AICDA. Interacts with APTX. Interacts with C1QBP. Interacts with ERBB4. Interacts (via C-terminus) with FMR1 isoform 6 (via N-terminus). Interacts with GZF1; this interaction is important for nucleolar localization of GZF1. Interacts with NSUN2. Interacts with NVL. Interacts (via N-terminus domain) with SETX. Interacts (via RRM1 and C-terminal RRM4/Arg/Gly-rich domains) with TERT; the interaction is important for nucleolar localization of TERT. Interacts with WDR46. Interacts with ZFP36. Interacts with LRRC34. Interacts with RRP1B. Interacts with HNRNPU; this interaction occurs during mitosis. Interacts with RIOK1; RIOK1 recruits NCL to PRMT5 for symmetrically methylation. Interacts with ZBTB7B. Interacts with MDK; this interaction promotes NCL clustering and lateral movements of this complex into lipid rafts leading to MDK internalization. Interacts with HDGF. Interacts with ALKBH2. Interacts with IGFBP5; this interaction is necessary for IGFBP5 localization to the nucleus. Interacts with DDX24 (when ubiquitinated); this interaction may be important during ribosome biogenesis. Some glutamate residues are glycylated by TTLL8. This modification occurs exclusively on glutamate residues and results in a glycine chain on the gamma-carboxyl group. In terms of processing, symmetrically methylated by PRMT5.

It is found in the nucleus. It localises to the nucleolus. Its subcellular location is the cytoplasm. Functionally, nucleolin is the major nucleolar protein of growing eukaryotic cells. It is found associated with intranucleolar chromatin and pre-ribosomal particles. It induces chromatin decondensation by binding to histone H1. It is thought to play a role in pre-rRNA transcription and ribosome assembly. May play a role in the process of transcriptional elongation. Binds RNA oligonucleotides with 5'-UUAGGG-3' repeats more tightly than the telomeric single-stranded DNA 5'-TTAGGG-3' repeats. The sequence is that of Nucleolin (NCL) from Mesocricetus auratus (Golden hamster).